A 423-amino-acid polypeptide reads, in one-letter code: Glutamate-1-semialdehyde 2,1-aminomutase (423 aa).

Lysine 266 carries the post-translational modification N6-(pyridoxal phosphate)lysine.

Belongs to the class-III pyridoxal-phosphate-dependent aminotransferase family. HemL subfamily. In terms of assembly, homodimer. Pyridoxal 5'-phosphate is required as a cofactor.

The protein resides in the cytoplasm. The catalysed reaction is (S)-4-amino-5-oxopentanoate = 5-aminolevulinate. It participates in porphyrin-containing compound metabolism; protoporphyrin-IX biosynthesis; 5-aminolevulinate from L-glutamyl-tRNA(Glu): step 2/2. This Desulfovibrio desulfuricans (strain ATCC 27774 / DSM 6949 / MB) protein is Glutamate-1-semialdehyde 2,1-aminomutase.